A 91-amino-acid chain; its full sequence is Small ribosomal subunit protein uS15 (91 aa).

The protein belongs to the universal ribosomal protein uS15 family. As to quaternary structure, part of the 30S ribosomal subunit. Forms a bridge to the 50S subunit in the 70S ribosome, contacting the 23S rRNA.

Its function is as follows. One of the primary rRNA binding proteins, it binds directly to 16S rRNA where it helps nucleate assembly of the platform of the 30S subunit by binding and bridging several RNA helices of the 16S rRNA. Forms an intersubunit bridge (bridge B4) with the 23S rRNA of the 50S subunit in the ribosome. This Deinococcus radiodurans (strain ATCC 13939 / DSM 20539 / JCM 16871 / CCUG 27074 / LMG 4051 / NBRC 15346 / NCIMB 9279 / VKM B-1422 / R1) protein is Small ribosomal subunit protein uS15.